The sequence spans 476 residues: Growth arrest-specific protein 7 (476 aa).

Residues 1–62 enclose the SH3 domain; the sequence is MSGARCRTLY…PASYVQLLEK (62 aa). Residues 77 to 110 form the WW domain; sequence VILPPGWQSYLSPQGRRYYVNTTTNETTWERPSS. The interval 100–171 is disordered; the sequence is TNETTWERPS…SSPSKKQSKE (72 aa). The segment covering 108 to 120 has biased composition (low complexity); the sequence is PSSSPGIPASPGS. 2 positions are modified to phosphoserine: S117 and S163. Residues 150–171 are compositionally biased toward polar residues; the sequence is RKSTGDSQNLGSSSPSKKQSKE. In terms of domain architecture, F-BAR spans 196–456; that stretch reads TEWSYCDYFW…LLRKVDPAKD (261 aa). Positions 309–419 form a coiled coil; that stretch reads ENFKKDMKKC…RLEVERVEMI (111 aa).

The protein localises to the cytoplasm. Functionally, may play a role in promoting maturation and morphological differentiation of cerebellar neurons. The polypeptide is Growth arrest-specific protein 7 (GAS7) (Homo sapiens (Human)).